The following is a 708-amino-acid chain: MGMSKSHSFFGYPLSIFFIVVNEFCERFSYYGMRAILILYFTNFISWDDNLSTAIYHTFVALCYLTPILGALIADSWLGKFKTIVSLSIVYTIGQAVTSVSSINDLTDHNHDGTPDSLPVHVVLSLIGLALIALGTGGIKPCVSAFGGDQFEEGQEKQRNRFFSIFYLAINAGSLLSTIITPMLRVQQCGIHSKQACYPLAFGVPAALMAVALIVFVLGSGMYKKFKPQGNIMGKVAKCIGFAIKNRFRHRSKAFPKREHWLDWAKEKYDERLISQIKMVTRVMFLYIPLPMFWALFDQQGSRWTLQATTMSGKIGALEIQPDQMQTVNAILIVIMVPIFDAVLYPLIAKCGFNFTSLKKMAVGMVLASMAFVVAAIVQVEIDKTLPVFPKGNEVQIKVLNIGNNTMNISLPGEMVTLGPMSQTNAFMTFDVNKLTRINISSPGSPVTAVTDDFKQGQRHTLLVWAPNHYQVVKDGLNQKPEKGENGIRFVNTFNELITITMSGKVYANISSYNASTYQFFPSGIKGFTISSTEIPPQCQPNFNTFYLEFGSAYTYIVQRKNDSCPEVKVFEDISANTVNMALQIPQYFLLTCGEVVFSVTGLEFSYSQAPSNMKSVLQAGWLLTVAVGNIIVLIVAGAGQFSKQWAEYILFAALLLVVCVIFAIMARFYTYINPAEIEAQFDEDEKKNRLEKSNPYFMSGANSQKQM.

A helical membrane pass occupies residues 1 to 21 (MGMSKSHSFFGYPLSIFFIVV). The Extracellular portion of the chain corresponds to 22–53 (NEFCERFSYYGMRAILILYFTNFISWDDNLST). N-linked (GlcNAc...) asparagine glycosylation occurs at Asn50. Residues 54–74 (AIYHTFVALCYLTPILGALIA) traverse the membrane as a helical segment. At 75–82 (DSWLGKFK) the chain is on the cytoplasmic side. A helical membrane pass occupies residues 83–103 (TIVSLSIVYTIGQAVTSVSSI). The Extracellular portion of the chain corresponds to 104 to 118 (NDLTDHNHDGTPDSL). The helical transmembrane segment at 119-139 (PVHVVLSLIGLALIALGTGGI) threads the bilayer. Topologically, residues 140–161 (KPCVSAFGGDQFEEGQEKQRNR) are cytoplasmic. A helical transmembrane segment spans residues 162–182 (FFSIFYLAINAGSLLSTIITP). Residues 183–198 (MLRVQQCGIHSKQACY) lie on the Extracellular side of the membrane. A helical transmembrane segment spans residues 199 to 219 (PLAFGVPAALMAVALIVFVLG). Residues 220–276 (SGMYKKFKPQGNIMGKVAKCIGFAIKNRFRHRSKAFPKREHWLDWAKEKYDERLISQ) lie on the Cytoplasmic side of the membrane. Residues 277 to 297 (IKMVTRVMFLYIPLPMFWALF) traverse the membrane as a helical segment. At 298-327 (DQQGSRWTLQATTMSGKIGALEIQPDQMQT) the chain is on the extracellular side. A helical membrane pass occupies residues 328–348 (VNAILIVIMVPIFDAVLYPLI). Topologically, residues 349-361 (AKCGFNFTSLKKM) are cytoplasmic. The helical transmembrane segment at 362–382 (AVGMVLASMAFVVAAIVQVEI) threads the bilayer. At 383–584 (DKTLPVFPKG…SANTVNMALQ (202 aa)) the chain is on the extracellular side. The interval 383–584 (DKTLPVFPKG…SANTVNMALQ (202 aa)) is extracellular domain (ECD). Asn404, Asn408, Asn439, Asn509, Asn514, and Asn562 each carry an N-linked (GlcNAc...) asparagine glycan. Residues 585–605 (IPQYFLLTCGEVVFSVTGLEF) traverse the membrane as a helical segment. At 606–619 (SYSQAPSNMKSVLQ) the chain is on the cytoplasmic side. Residues 620 to 640 (AGWLLTVAVGNIIVLIVAGAG) traverse the membrane as a helical segment. Topologically, residues 641–645 (QFSKQ) are extracellular. Residues 646 to 666 (WAEYILFAALLLVVCVIFAIM) traverse the membrane as a helical segment. Over 667–708 (ARFYTYINPAEIEAQFDEDEKKNRLEKSNPYFMSGANSQKQM) the chain is Cytoplasmic.

This sequence belongs to the major facilitator superfamily. Proton-dependent oligopeptide transporter (POT/PTR) (TC 2.A.17) family. Interacts (via extracellular domain region) with trypsin. In terms of tissue distribution, expressed in small intestine.

Its subcellular location is the apical cell membrane. It carries out the reaction a dipeptide(out) + H(+)(out) = a dipeptide(in) + H(+)(in). The enzyme catalyses an L-amino acid tripeptide(out) + H(+)(out) = an L-amino acid tripeptide(in) + H(+)(in). The catalysed reaction is L-alanyl-L-lysine(out) + H(+)(out) = L-alanyl-L-lysine(in) + H(+)(in). It catalyses the reaction L-alanyl-L-proline(out) + H(+)(out) = L-alanyl-L-proline(in) + H(+)(in). It carries out the reaction L-alanyl-L-valine(out) + H(+)(out) = L-alanyl-L-valine(in) + H(+)(in). The enzyme catalyses carnosine(out) + H(+)(out) = carnosine(in) + H(+)(in). The catalysed reaction is glycyl-L-glutamine(out) + H(+)(out) = glycyl-L-glutamine(in) + H(+)(in). It catalyses the reaction glycyl-L-leucine(out) + H(+)(out) = glycyl-L-leucine(in) + H(+)(in). It carries out the reaction glycyl-L-proline(out) + H(+)(out) = glycyl-L-proline(in) + H(+)(in). The enzyme catalyses glycyl-sarcosine(out) + H(+)(out) = glycyl-sarcosine(in) + H(+)(in). The catalysed reaction is L-leucyl-L-leucine(out) + H(+)(out) = L-leucyl-L-leucine(in) + H(+)(in). It catalyses the reaction L-leucyl-L-proline(out) + H(+)(out) = L-leucyl-L-proline(in) + H(+)(in). It carries out the reaction L-phenylalanyl-L-leucine(out) + H(+)(out) = L-phenylalanyl-L-leucine(in) + H(+)(in). The enzyme catalyses L-phenylalanyl-L-phenylalanine(out) + H(+)(out) = L-phenylalanyl-L-phenylalanine(in) + H(+)(in). The catalysed reaction is L-lysyl-glycine(out) + H(+)(out) = L-lysyl-glycine(in) + H(+)(in). It catalyses the reaction L-tyrosylglycine(out) + H(+)(out) = L-tyrosylglycine(in) + H(+)(in). It carries out the reaction L-alanyl-L-aspartate(out) + 2 H(+)(out) = L-alanyl-L-aspartate(in) + 2 H(+)(in). The enzyme catalyses L-aspartyl-glycine(out) + 2 H(+)(out) = L-aspartyl-glycine(in) + 2 H(+)(in). The catalysed reaction is glycyl-L-aspartate(out) + 2 H(+)(out) = glycyl-L-aspartate(in) + 2 H(+)(in). It catalyses the reaction glycyl-L-glutamate(out) + 2 H(+)(out) = glycyl-L-glutamate(in) + 2 H(+)(in). It carries out the reaction L-alanyl-L-leucyl-L-alanine(out) + H(+)(out) = L-alanyl-L-leucyl-L-alanine(in) + H(+)(in). The enzyme catalyses L-alanyl-L-prolylglycine(out) + H(+)(out) = L-alanyl-L-prolylglycine(in) + H(+)(in). The catalysed reaction is glycylglycyl-L-isoleucine(out) + H(+)(out) = glycylglycyl-L-isoleucine(in) + H(+)(in). It catalyses the reaction glycylglycyl-L-proline(out) + H(+)(out) = glycylglycyl-L-proline(in) + H(+)(in). It carries out the reaction L-methionyl-L-phenylalanyl-L-methionine(out) + H(+)(out) = L-methionyl-L-phenylalanyl-L-methionine(in) + H(+)(in). The enzyme catalyses N-acetyl-D-muramoyl-L-alanyl-D-isoglutamine(out) + 2 H(+)(out) = N-acetyl-D-muramoyl-L-alanyl-D-isoglutamine(in) + 2 H(+)(in). The catalysed reaction is N(alpha)-formyl-L-methionyl-L-leucyl-L-phenylalanine(out) + 2 H(+)(out) = N(alpha)-formyl-L-methionyl-L-leucyl-L-phenylalanine(in) + 2 H(+)(in). Electrogenic proton-coupled amino-acid transporter that transports oligopeptides of 2 to 4 amino acids with a preference for dipeptides. Transports neutral and monovalently charged peptides with a proton to peptide stoichiometry of 1:1 or 2:1. Primarily responsible for the absorption of dietary di- and tripeptides from the small intestinal lumen. Mediates transepithelial transport of muramyl and N-formylated bacterial dipeptides contributing to recognition of pathogenic bacteria by the mucosal immune system. The protein is Solute carrier family 15 member 1 of Homo sapiens (Human).